Reading from the N-terminus, the 413-residue chain is CinA-like protein (413 aa).

It belongs to the CinA family.

This is CinA-like protein from Geotalea daltonii (strain DSM 22248 / JCM 15807 / FRC-32) (Geobacter daltonii).